The sequence spans 332 residues: Formamidase (332 aa).

The region spanning 14 to 259 (FLTALIQYPV…WEIVTAEVYP (246 aa)) is the CN hydrolase domain. The Proton acceptor role is filled by Glu-60. The Proton donor role is filled by Lys-132. Cys-165 serves as the catalytic Nucleophile.

This sequence belongs to the carbon-nitrogen hydrolase superfamily. Aliphatic amidase family.

It carries out the reaction formamide + H2O = formate + NH4(+). In terms of biological role, is an aliphatic amidase with a restricted substrate specificity, as it only hydrolyzes formamide. The polypeptide is Formamidase (Bacillus cereus (strain B4264)).